A 549-amino-acid chain; its full sequence is Cell pattern formation-associated protein StuA (549 aa).

Residues Arg-86 to Pro-192 enclose the HTH APSES-type domain. A DNA-binding region (H-T-H motif) is located at residues Gly-120–Glu-141. 4 disordered regions span residues Ala-205–Ile-227, Ser-246–Arg-288, Arg-332–Asn-466, and Ala-514–Gly-549. Residues Ser-246–Gln-266 show a composition bias toward polar residues. Basic and acidic residues-rich tracts occupy residues Arg-278–Arg-288, Arg-332–His-346, and Arg-385–Ser-395. The interval Thr-516–Gln-545 is nuclear localization domain. The span at Ala-532 to Gly-549 shows a compositional bias: low complexity.

It belongs to the EFG1/PHD1/stuA family.

It localises to the nucleus. In terms of biological role, transcription factor that regulates asexual reproduction. Binds the StuA-response elements (StRE) with the consensus sequence 5'-(A/T)CGCG(T/A)N(A/C)-3' at the promoters of target genes. The protein is Cell pattern formation-associated protein StuA of Gibberella moniliformis (strain M3125 / FGSC 7600) (Maize ear and stalk rot fungus).